The following is a 230-amino-acid chain: MILIEHILGNVKKDPVWQAKLKDATFDLLILDQREAQKSRCRKSSTQGLDLGISLDRHVVLADGDVLAWDEENNVAVVVQINLRDVMVIDLSELKSRSPDELIKTCFELGHALGNQHWKAVTKHNEVYVPLTVATSMMDSVMRTHGFQHLPFRFVKGAEILPQLSNSEARLLFGGAEDSDTHVHVDSPLDEPHGSGLHVHAIHSHGDGHSHSHSHDHDHDHRHDDHDHKH.

Basic and acidic residues-rich tracts occupy residues 182 to 193 and 204 to 230; these read HVHVDSPLDEPH and SHGD…DHKH. Residues 182 to 230 form a disordered region; sequence HVHVDSPLDEPHGSGLHVHAIHSHGDGHSHSHSHDHDHDHRHDDHDHKH.

This sequence belongs to the UreE family.

It is found in the cytoplasm. Involved in urease metallocenter assembly. Binds nickel. Probably functions as a nickel donor during metallocenter assembly. This chain is Urease accessory protein UreE, found in Yersinia mollaretii.